The primary structure comprises 317 residues: L-lactate dehydrogenase (317 aa).

Residues V17, D38, K43, Y68, and 82–83 (GV) contribute to the NAD(+) site. R91 is a substrate binding site. NAD(+) contacts are provided by residues S104, 121–123 (VSN), and S146. Substrate is bound at residue 123–126 (NPVD). 151–154 (DTSR) contacts substrate. The beta-D-fructose 1,6-bisphosphate site is built by K156 and H171. Catalysis depends on H178, which acts as the Proton acceptor. Phosphotyrosine is present on Y224. T233 is a binding site for substrate.

This sequence belongs to the LDH/MDH superfamily. LDH family. In terms of assembly, homotetramer.

The protein resides in the cytoplasm. The enzyme catalyses (S)-lactate + NAD(+) = pyruvate + NADH + H(+). It functions in the pathway fermentation; pyruvate fermentation to lactate; (S)-lactate from pyruvate: step 1/1. With respect to regulation, allosterically activated by fructose 1,6-bisphosphate (FBP). Its function is as follows. Catalyzes the conversion of lactate to pyruvate. In Clostridium perfringens (strain SM101 / Type A), this protein is L-lactate dehydrogenase.